The chain runs to 439 residues: MAYFNDIAPIKYEGTKTKNMFAFRHYNPEEVVAGKTMEEQLHFALAFWHTITMDGSDPFGGATMERPWDLEGGSELDRAHRRVDAFFEIAEKLGVKYYCFHDIDIAPTGNSLKEFYANLDEITDHLLEKQKATGIKLLWNTANMFSNPRYMNGVSTSNRAEVFAYGAAQVKKGLELSKKLGGENYVFWGGREGYESLLNTDRGLEMDHMAKFFHLAIDYAKSINHLPIFLIEPKPKEPMTHQYDFDAATALAFLQKYDLDKYFKLNLETNHAWLVGHTFEHELNTARTFNALGSIDANQGNYLLGWDTDEFPTLVIDITLAMHQILLNGGLGKGGINFDAKVRRTSFKAEDLILAHIAGMDTYARALKGAAAIIEDKFLSDIVDERYTSYKNTEVGQSIENGTATFESLAAFALEHGDDIELDSNHLEYIKSVLNDYLV.

Residues histidine 101 and aspartate 104 contribute to the active site. Residues glutamate 232, glutamate 268, histidine 271, aspartate 296, aspartate 307, aspartate 309, and aspartate 339 each coordinate Mg(2+).

This sequence belongs to the xylose isomerase family. In terms of assembly, homotetramer. The cofactor is Mg(2+).

The protein resides in the cytoplasm. The catalysed reaction is alpha-D-xylose = alpha-D-xylulofuranose. The sequence is that of Xylose isomerase (xylA) from Lactococcus lactis subsp. lactis (strain IL1403) (Streptococcus lactis).